Reading from the N-terminus, the 627-residue chain is tRNA uridine 5-carboxymethylaminomethyl modification enzyme MnmG (627 aa).

Residues Gly-13–Gly-18, Val-125, and Ser-180 contribute to the FAD site. An NAD(+)-binding site is contributed by Gly-274 to Phe-288. Position 371 (Gln-371) interacts with FAD.

Belongs to the MnmG family. As to quaternary structure, homodimer. Heterotetramer of two MnmE and two MnmG subunits. The cofactor is FAD.

It localises to the cytoplasm. NAD-binding protein involved in the addition of a carboxymethylaminomethyl (cmnm) group at the wobble position (U34) of certain tRNAs, forming tRNA-cmnm(5)s(2)U34. The sequence is that of tRNA uridine 5-carboxymethylaminomethyl modification enzyme MnmG from Francisella tularensis subsp. holarctica (strain FTNF002-00 / FTA).